The sequence spans 662 residues: DNA ligase (662 aa).

NAD(+)-binding positions include 32-36, 75-76, and Glu106; these read DAEYD and SL. Lys108 functions as the N6-AMP-lysine intermediate in the catalytic mechanism. 4 residues coordinate NAD(+): Arg129, Glu164, Lys271, and Lys295. Cys389, Cys392, Cys407, and Cys413 together coordinate Zn(2+). The BRCT domain occupies 580-662; it reads SSNSVLNNKI…HKVISLGVFK (83 aa).

It belongs to the NAD-dependent DNA ligase family. LigA subfamily. It depends on Mg(2+) as a cofactor. Mn(2+) is required as a cofactor.

The catalysed reaction is NAD(+) + (deoxyribonucleotide)n-3'-hydroxyl + 5'-phospho-(deoxyribonucleotide)m = (deoxyribonucleotide)n+m + AMP + beta-nicotinamide D-nucleotide.. In terms of biological role, DNA ligase that catalyzes the formation of phosphodiester linkages between 5'-phosphoryl and 3'-hydroxyl groups in double-stranded DNA using NAD as a coenzyme and as the energy source for the reaction. It is essential for DNA replication and repair of damaged DNA. This chain is DNA ligase, found in Wolbachia pipientis wMel.